Reading from the N-terminus, the 707-residue chain is Ribosome biogenesis protein ENP2 (707 aa).

5 WD repeats span residues 54 to 94 (EFSE…LKFD), 178 to 217 (LDTEGVNHVSINEVNGLLAAGTETNVVEFWDPRSRSRVSK), 226 to 265 (NRPFQVTTTSFRNDGLTFACGTSNGYSYIYDLRTSEPSII), 269 to 310 (GYGF…AYAS), and 312 to 351 (EPSVDINDIEHVPGTGMFFTANESIPMHTYYIPSLGPSPR). Residues 523–707 (LTAAEESDEE…RASKNAFRGM (185 aa)) form a disordered region. Residue S529 is modified to Phosphoserine. Residues 532–544 (ERIAMKDGRGHYD) are compositionally biased toward basic and acidic residues. The span at 545–558 (YEDEESDEEESDDE) shows a compositional bias: acidic residues. Phosphoserine occurs at positions 550 and 555. Basic and acidic residues-rich tracts occupy residues 559–598 (TNQKSNKEELSEKDLRKMEKQKALIERRKKEKEQSERFMN), 629–647 (ENGKKSNESILRRNQRGEA), 659–671 (KDGNYKSRRHDNS), and 680–697 (NGNKKDNGRSKPRFENRR).

The protein belongs to the WD repeat NOL10/ENP2 family. Component of the 90S pre-ribosomes.

Its subcellular location is the nucleus. It localises to the nucleolus. Its function is as follows. May be involved in rRNA-processing and ribosome biosynthesis. The protein is Ribosome biogenesis protein ENP2 (ENP2) of Saccharomyces cerevisiae (strain ATCC 204508 / S288c) (Baker's yeast).